Reading from the N-terminus, the 122-residue chain is uncharacterized protein (122 aa).

The helical transmembrane segment at I93–I113 threads the bilayer.

It localises to the membrane. This is an uncharacterized protein from Saccharomyces cerevisiae (strain ATCC 204508 / S288c) (Baker's yeast).